A 378-amino-acid chain; its full sequence is RNA polymerase sigma factor SigA (378 aa).

The interval Met-1–Asn-29 is disordered. Residues Leu-145–Thr-215 are sigma-70 factor domain-2. Positions Asp-169–Gln-172 match the Interaction with polymerase core subunit RpoC motif. A sigma-70 factor domain-3 region spans residues Glu-224–Ala-300. A sigma-70 factor domain-4 region spans residues Ile-313–His-366. The segment at residues Leu-339–Ala-358 is a DNA-binding region (H-T-H motif).

This sequence belongs to the sigma-70 factor family. RpoD/SigA subfamily. Interacts transiently with the RNA polymerase catalytic core.

It is found in the cytoplasm. Sigma factors are initiation factors that promote the attachment of RNA polymerase to specific initiation sites and are then released. This sigma factor is the primary sigma factor during exponential growth. The sequence is that of RNA polymerase sigma factor SigA from Clostridium acetobutylicum (strain ATCC 824 / DSM 792 / JCM 1419 / IAM 19013 / LMG 5710 / NBRC 13948 / NRRL B-527 / VKM B-1787 / 2291 / W).